The sequence spans 145 residues: Transcription antitermination protein NusB (145 aa).

It belongs to the NusB family.

Functionally, involved in transcription antitermination. Required for transcription of ribosomal RNA (rRNA) genes. Binds specifically to the boxA antiterminator sequence of the ribosomal RNA (rrn) operons. This is Transcription antitermination protein NusB from Aromatoleum aromaticum (strain DSM 19018 / LMG 30748 / EbN1) (Azoarcus sp. (strain EbN1)).